The chain runs to 1589 residues: Centrosomal protein of 170 kDa protein B (1589 aa).

Positions 23–73 constitute an FHA domain; the sequence is IFVGREECELMLQSRSVDKQHAVINYDQDRDEHWVKDLGSLNGTFVNDMRI. Disordered stretches follow at residues 130-261, 287-309, 325-388, and 409-583; these read RSEA…GAAP, ITKF…EMVS, LLHR…RLQR, and FDED…EVEE. 2 stretches are compositionally biased toward basic and acidic residues: residues 147-156 and 243-253; these read RPEKGDRRPG and PAHEMPTKDAE. The segment covering 330-344 has biased composition (basic and acidic residues); the sequence is GPGDDRHSTKSDLPV. A phosphoserine mark is found at Ser-360 and Ser-421. 2 stretches are compositionally biased toward basic and acidic residues: residues 430–446 and 467–476; these read PKAD…RDRP and LKREKTEERL. Residues 478 to 489 show a composition bias toward low complexity; it reads SPSPASRTPARP. Residues Ser-480 and Ser-492 each carry the phosphoserine modification. Positions 520-530 are enriched in pro residues; it reads EKVPPVLPAPL. Residue Ser-536 is modified to Phosphoserine. Over residues 538 to 548 the composition is skewed to pro residues; sequence VGPPTPPPAPT. Thr-542 bears the Phosphothreonine mark. A phosphoserine mark is found at Ser-597, Ser-619, Ser-655, Ser-711, Ser-721, Ser-746, Ser-748, Ser-751, Ser-753, Ser-772, Ser-829, Ser-853, Ser-954, Ser-972, Ser-986, and Ser-988. Disordered regions lie at residues 598–895, 934–1316, 1350–1374, and 1532–1552; these read PELS…LQDL, DAEC…PYGF, DGDT…TPAS, and AQPG…PASA. The segment covering 711–722 has biased composition (low complexity); that stretch reads SPAGPESSRRSG. Residues 957 to 972 show a composition bias toward polar residues; the sequence is DTASTVSLRSGKSGPS. A compositionally biased stretch (basic residues) spans 1029-1038; it reads SAIRRGHRPR. Phosphoserine occurs at positions 1135, 1179, and 1199. The span at 1221–1230 shows a compositional bias: polar residues; that stretch reads AANTATTTGP. Positions 1286-1301 are enriched in low complexity; that stretch reads PRAGSSSRARSRAPGP. Thr-1304 bears the Phosphothreonine mark. Phosphoserine is present on residues Ser-1356 and Ser-1362. The span at 1363–1374 shows a compositional bias: polar residues; sequence ASLSNMPSTPAS. Residues 1542–1552 show a composition bias toward low complexity; it reads AAQSPPSPASA. A phosphoserine mark is found at Ser-1545 and Ser-1548.

The protein belongs to the CEP170 family.

It localises to the cytoplasm. The protein resides in the cytoskeleton. In terms of biological role, plays a role in microtubule organization. This chain is Centrosomal protein of 170 kDa protein B (CEP170B), found in Homo sapiens (Human).